Reading from the N-terminus, the 55-residue chain is Hirustasin (55 aa).

5 cysteine pairs are disulfide-bonded: Cys-6–Cys-17, Cys-11–Cys-22, Cys-24–Cys-44, Cys-29–Cys-48, and Cys-33–Cys-50. The Antistasin-like domain occupies 24-50 (CNEVHCRIRCKYGLKKDENGCEYPCSC).

Belongs to the protease inhibitor I15 (antistasin) family.

It is found in the secreted. Acts as an inhibitor of tissue kallikrein, trypsin, chymotrypsin and neutrophil cathepsin G. In Hirudo medicinalis (Medicinal leech), this protein is Hirustasin.